A 184-amino-acid chain; its full sequence is Photosystem I assembly protein Ycf4 (184 aa).

A run of 2 helical transmembrane segments spans residues Phe-22 to Ser-42 and Ile-57 to Ser-77.

Belongs to the Ycf4 family.

It localises to the plastid. It is found in the chloroplast thylakoid membrane. Its function is as follows. Seems to be required for the assembly of the photosystem I complex. This is Photosystem I assembly protein Ycf4 from Lobularia maritima (Sweet alyssum).